Reading from the N-terminus, the 616-residue chain is MVLPKSKNQIGLGRAIQSDFTKNRRNRKGGLKHIVDSDPKAHRAALRSVTHETDLDEFLNTAELGEVEFIAEKQNVTVIQNPEQNPFLLSKEEAARSKQKQEKNKDRLTIPRRPHWDQTTTAVELDRMERESFLNWRRNLAQLQDVEGFIVTPFERNLEIWRQLWRVIERSDVVVQIVDARNPLFFRSAHLEQYVKEVGPSKKNFLLVNKADMLTEEQRNYWSSYFNENNIPFLFFSARMAAEANERGEDLETYESTSSNEIPESLQADENDVHSSRIATLKVLEGIFEKFASTLPDGKTKMTFGLVGYPNVGKSSTINALVGSKKVSVSSTPGKTKHFQTINLSEKVSLLDCPGLVFPSFATTQADLVLDGVLPIDQLREYTGPSALMAERIPKEVLETLYTIRIRIKPIEEGGTGVPSAQEVLFPFARSRGFMRAHHGTPDDSRAARILLKDYVNGKLLYVHPPPNYPNSGSEFNKEHHQKIVSATSDSITEKLQRTAISDNTLSAESQLVDDEYFQENPHVRPMVKGTAVAMQGPVYKGRNTMQPFQRRLNDDASPKYPMNAQGKPLSRRKARQLTALELGVSPEALSSATSKKHNKKNKRSKQRSGVVIDDY.

Residues 161–359 enclose the CP-type G domain; it reads WRQLWRVIER…LLDCPGLVFP (199 aa). 209–212 is a GTP binding site; it reads NKAD. The segment at 247–269 is disordered; sequence RGEDLETYESTSSNEIPESLQAD. Residues 308–315 and 352–355 each bind GTP; these read GYPNVGKS and DCPG. Disordered regions lie at residues 552–574 and 587–616; these read RLND…SRRK and PEAL…IDDY. Over residues 595–607 the composition is skewed to basic residues; it reads SKKHNKKNKRSKQ.

It belongs to the TRAFAC class YlqF/YawG GTPase family. LSG1 subfamily.

It is found in the cytoplasm. Functionally, GTPase required for the nuclear export of the 60S ribosomal subunit. Acts by mediating the release of nmd3 from the 60S ribosomal subunit after export into the cytoplasm. In Schizosaccharomyces pombe (strain 972 / ATCC 24843) (Fission yeast), this protein is Large subunit GTPase 1 (lsg1).